The primary structure comprises 322 residues: uncharacterized protein (322 aa).

This is an uncharacterized protein from Acanthamoeba polyphaga (Amoeba).